Reading from the N-terminus, the 425-residue chain is Histidine--tRNA ligase (425 aa).

The protein belongs to the class-II aminoacyl-tRNA synthetase family. In terms of assembly, homodimer.

The protein localises to the cytoplasm. It carries out the reaction tRNA(His) + L-histidine + ATP = L-histidyl-tRNA(His) + AMP + diphosphate + H(+). The protein is Histidine--tRNA ligase of Streptococcus uberis (strain ATCC BAA-854 / 0140J).